Here is a 58-residue protein sequence, read N- to C-terminus: Small integral membrane protein 11 (58 aa).

Residues 10-32 form a helical membrane-spanning segment; sequence PLLLYILAAKTLILCLTFAGVKM. Residues 29–58 adopt a coiled-coil conformation; it reads GVKMYQRKRLEAKQQKLEAERKKQSEKKDN.

As to expression, expressed in heart, spleen, liver, stomach, muscle, lung, testis, skin, PBL and bone marrow.

It localises to the membrane. This chain is Small integral membrane protein 11, found in Homo sapiens (Human).